We begin with the raw amino-acid sequence, 984 residues long: Ephrin type-B receptor 1 (984 aa).

The signal sequence occupies residues 1 to 17; that stretch reads MALDCLLLFLLASAVAA. The Extracellular segment spans residues 18 to 540; sequence MEETLMDTRT…YKSELREQLP (523 aa). An Eph LBD domain is found at 19–201; the sequence is EETLMDTRTA…FFKKCPSIVQ (183 aa). Fibronectin type-III domains follow at residues 322-432 and 433-528; these read VPSG…TNQA and APST…TLTD. Asparagine 334, asparagine 426, and asparagine 480 each carry an N-linked (GlcNAc...) asparagine glycan. The chain crosses the membrane as a helical span at residues 541 to 563; sequence LIAGSAAAGVVFVVSLVAISIVC. Residues 564–984 lie on the Cytoplasmic side of the membrane; it reads SRKRAYSKEA…QMNQSPSVMA (421 aa). Tyrosine 600 is subject to Phosphotyrosine. Residues 619 to 882 form the Protein kinase domain; the sequence is VKIEEVIGAG…EIVNTLDKMI (264 aa). ATP is bound by residues 625-633 and lysine 651; that span reads IGAGEFGEV. Aspartate 744 (proton acceptor) is an active-site residue. Positions 911–975 constitute an SAM domain; sequence TAFTTVDDWL…LSSIHSMRVQ (65 aa). Tyrosine 928 bears the Phosphotyrosine; by autocatalysis mark. Positions 982 to 984 match the PDZ-binding motif; that stretch reads VMA.

The protein belongs to the protein kinase superfamily. Tyr protein kinase family. Ephrin receptor subfamily. In terms of assembly, heterotetramer upon binding of the ligand. The heterotetramer is composed of an ephrin dimer and a receptor dimer. Oligomerization is probably required to induce biological responses. Interacts with EPHB6; transphosphorylates EPHB6 to form an active signaling complex. Interacts with PICK1. Interacts (through Tyr-594) with NCK1 (via SH2 domain); activates the JUN cascade to regulate cell adhesion. The ligand-activated form interacts (through Tyr-928) with GRB7 and GRB10 (via SH2 domains). The ligand-activated form interacts (residues within the catalytic domain) with GRB2 (via SH2 domain). Interacts with GRB2, SHC1 and SRC; activates the MAPK/ERK cascade to regulate cell migration. Interacts with CBL; regulates receptor degradation through ubiquitination. Interacts with ACP1. Post-translationally, phosphorylated. Autophosphorylation is stimulated by the ligand EFNB1. Required for interaction with SH2 domain-containing interactors, for activation of the MAPK/ERK and JUN signaling cascades and for ubiquitination by CBL. Ubiquitinated; (EFNB1)ligand-induced poly- and/or multi-ubiquitination by CBL is regulated by SRC and leads to lysosomal degradation. In terms of tissue distribution, expressed in neural stem and progenitor cells in the dentate gyrus. Expressed in myogenic progenitor cells.

Its subcellular location is the cell membrane. It is found in the early endosome membrane. The protein localises to the cell projection. It localises to the dendrite. It carries out the reaction L-tyrosyl-[protein] + ATP = O-phospho-L-tyrosyl-[protein] + ADP + H(+). Functionally, receptor tyrosine kinase which binds promiscuously transmembrane ephrin-B family ligands residing on adjacent cells, leading to contact-dependent bidirectional signaling into neighboring cells. The signaling pathway downstream of the receptor is referred to as forward signaling while the signaling pathway downstream of the ephrin ligand is referred to as reverse signaling. Cognate/functional ephrin ligands for this receptor include EFNB1, EFNB2 and EFNB3. During nervous system development, regulates retinal axon guidance redirecting ipsilaterally ventrotemporal retinal ganglion cells axons at the optic chiasm midline. This probably requires repulsive interaction with EFNB2. In the adult nervous system together with EFNB3, regulates chemotaxis, proliferation and polarity of the hippocampus neural progenitors. In addition to its role in axon guidance also plays an important redundant role with other ephrin-B receptors in development and maturation of dendritic spines and synapse formation. May also regulate angiogenesis. More generally, may play a role in targeted cell migration and adhesion. Upon activation by EFNB1 and probably other ephrin-B ligands activates the MAPK/ERK and the JNK signaling cascades to regulate cell migration and adhesion respectively. Involved in the maintenance of the pool of satellite cells (muscle stem cells) by promoting their self-renewal and reducing their activation and differentiation. The sequence is that of Ephrin type-B receptor 1 (Ephb1) from Mus musculus (Mouse).